The sequence spans 406 residues: Bifunctional enzyme IspD/IspF (406 aa).

The 2-C-methyl-D-erythritol 4-phosphate cytidylyltransferase stretch occupies residues 1-246; it reads MTQMHSTQPM…KLSAGLLPDV (246 aa). Positions 247–406 are 2-C-methyl-D-erythritol 2,4-cyclodiphosphate synthase; that stretch reads RTGNGYDVHQ…ATVVYRGGRP (160 aa). 2 residues coordinate a divalent metal cation: Asp253 and His255. Residues 253–255 and 279–280 each bind 4-CDP-2-C-methyl-D-erythritol 2-phosphate; these read DVH and HS. His287 contacts a divalent metal cation. Residues 301 to 303, 377 to 380, Phe384, and Arg387 contribute to the 4-CDP-2-C-methyl-D-erythritol 2-phosphate site; these read DIG and TTNE.

This sequence in the N-terminal section; belongs to the IspD/TarI cytidylyltransferase family. IspD subfamily. It in the C-terminal section; belongs to the IspF family. It depends on a divalent metal cation as a cofactor.

The enzyme catalyses 2-C-methyl-D-erythritol 4-phosphate + CTP + H(+) = 4-CDP-2-C-methyl-D-erythritol + diphosphate. It catalyses the reaction 4-CDP-2-C-methyl-D-erythritol 2-phosphate = 2-C-methyl-D-erythritol 2,4-cyclic diphosphate + CMP. The protein operates within isoprenoid biosynthesis; isopentenyl diphosphate biosynthesis via DXP pathway; isopentenyl diphosphate from 1-deoxy-D-xylulose 5-phosphate: step 2/6. Its pathway is isoprenoid biosynthesis; isopentenyl diphosphate biosynthesis via DXP pathway; isopentenyl diphosphate from 1-deoxy-D-xylulose 5-phosphate: step 4/6. Functionally, bifunctional enzyme that catalyzes the formation of 4-diphosphocytidyl-2-C-methyl-D-erythritol from CTP and 2-C-methyl-D-erythritol 4-phosphate (MEP) (IspD), and catalyzes the conversion of 4-diphosphocytidyl-2-C-methyl-D-erythritol 2-phosphate (CDP-ME2P) to 2-C-methyl-D-erythritol 2,4-cyclodiphosphate (ME-CPP) with a corresponding release of cytidine 5-monophosphate (CMP) (IspF). This chain is Bifunctional enzyme IspD/IspF, found in Rhizobium rhizogenes (strain K84 / ATCC BAA-868) (Agrobacterium radiobacter).